The following is a 249-amino-acid chain: Phosphate import ATP-binding protein PstB 2 (249 aa).

The region spanning 4 to 244 is the ABC transporter domain; it reads FEVTHLNLFY…PKDHRTQGYV (241 aa). Residue 36–43 coordinates ATP; sequence GPSGCGKS.

Belongs to the ABC transporter superfamily. Phosphate importer (TC 3.A.1.7) family. In terms of assembly, the complex is composed of two ATP-binding proteins (PstB), two transmembrane proteins (PstC and PstA) and a solute-binding protein (PstS).

The protein resides in the cell inner membrane. The catalysed reaction is phosphate(out) + ATP + H2O = ADP + 2 phosphate(in) + H(+). Its function is as follows. Part of the ABC transporter complex PstSACB involved in phosphate import. Responsible for energy coupling to the transport system. In Shewanella oneidensis (strain ATCC 700550 / JCM 31522 / CIP 106686 / LMG 19005 / NCIMB 14063 / MR-1), this protein is Phosphate import ATP-binding protein PstB 2.